The chain runs to 90 residues: Small ribosomal subunit protein uS15 (90 aa).

This sequence belongs to the universal ribosomal protein uS15 family. Part of the 30S ribosomal subunit. Forms a bridge to the 50S subunit in the 70S ribosome, contacting the 23S rRNA.

Its function is as follows. One of the primary rRNA binding proteins, it binds directly to 16S rRNA where it helps nucleate assembly of the platform of the 30S subunit by binding and bridging several RNA helices of the 16S rRNA. Forms an intersubunit bridge (bridge B4) with the 23S rRNA of the 50S subunit in the ribosome. The chain is Small ribosomal subunit protein uS15 from Wolbachia sp. subsp. Drosophila simulans (strain wRi).